The sequence spans 101 residues: Small ribosomal subunit protein uS14 (101 aa).

Belongs to the universal ribosomal protein uS14 family. In terms of assembly, part of the 30S ribosomal subunit. Contacts proteins S3 and S10.

Functionally, binds 16S rRNA, required for the assembly of 30S particles and may also be responsible for determining the conformation of the 16S rRNA at the A site. In Ruthia magnifica subsp. Calyptogena magnifica, this protein is Small ribosomal subunit protein uS14.